The chain runs to 134 residues: UPF0412 protein YaaI (134 aa).

A signal peptide spans 1–23; the sequence is MKSVFTLSASLAISLLLCCTAQA.

This sequence belongs to the UPF0412 family.

The protein is UPF0412 protein YaaI of Escherichia coli O7:K1 (strain IAI39 / ExPEC).